A 1082-amino-acid polypeptide reads, in one-letter code: Carbamoyl phosphate synthase large chain (1082 aa).

The carboxyphosphate synthetic domain stretch occupies residues 1 to 401; sequence MPKDKALKKV…ALLKAVRSLE (401 aa). Residues Arg129, Arg169, Gly175, Gly176, Lys208, Val210, Glu215, Gly241, Ile242, His243, Gln284, and Glu298 each contribute to the ATP site. In terms of domain architecture, ATP-grasp 1 spans 133–327; that stretch reads KNMCLEIGEP…IAKVATKVAV (195 aa). Gln284, Glu298, and Asn300 together coordinate Mg(2+). Mn(2+) contacts are provided by Gln284, Glu298, and Asn300. The oligomerization domain stretch occupies residues 402 to 561; sequence TGVTGMNLPE…YSTYEDEDEA (160 aa). The tract at residues 562–944 is carbamoyl phosphate synthetic domain; that stretch reads EPQAVRKVVV…ALYKACLSAG (383 aa). One can recognise an ATP-grasp 2 domain in the interval 686-876; sequence DQLVAELGIP…MVNLATRICL (191 aa). Residues Arg722, Lys761, Leu763, Glu767, Gly792, Ile793, His794, Ser795, Gln835, and Glu847 each contribute to the ATP site. 3 residues coordinate Mg(2+): Gln835, Glu847, and Asn849. Residues Gln835, Glu847, and Asn849 each coordinate Mn(2+). The 138-residue stretch at 945-1082 folds into the MGS-like domain; it reads YTLPSSGKAV…PLIPLQEYVS (138 aa). An allosteric domain region spans residues 945-1082; it reads YTLPSSGKAV…PLIPLQEYVS (138 aa).

It belongs to the CarB family. In terms of assembly, composed of two chains; the small (or glutamine) chain promotes the hydrolysis of glutamine to ammonia, which is used by the large (or ammonia) chain to synthesize carbamoyl phosphate. Tetramer of heterodimers (alpha,beta)4. The cofactor is Mg(2+). Mn(2+) is required as a cofactor.

It catalyses the reaction hydrogencarbonate + L-glutamine + 2 ATP + H2O = carbamoyl phosphate + L-glutamate + 2 ADP + phosphate + 2 H(+). The catalysed reaction is hydrogencarbonate + NH4(+) + 2 ATP = carbamoyl phosphate + 2 ADP + phosphate + 2 H(+). The protein operates within amino-acid biosynthesis; L-arginine biosynthesis; carbamoyl phosphate from bicarbonate: step 1/1. It functions in the pathway pyrimidine metabolism; UMP biosynthesis via de novo pathway; (S)-dihydroorotate from bicarbonate: step 1/3. Its function is as follows. Large subunit of the glutamine-dependent carbamoyl phosphate synthetase (CPSase). CPSase catalyzes the formation of carbamoyl phosphate from the ammonia moiety of glutamine, carbonate, and phosphate donated by ATP, constituting the first step of 2 biosynthetic pathways, one leading to arginine and/or urea and the other to pyrimidine nucleotides. The large subunit (synthetase) binds the substrates ammonia (free or transferred from glutamine from the small subunit), hydrogencarbonate and ATP and carries out an ATP-coupled ligase reaction, activating hydrogencarbonate by forming carboxy phosphate which reacts with ammonia to form carbamoyl phosphate. The polypeptide is Carbamoyl phosphate synthase large chain (Desulforudis audaxviator (strain MP104C)).